Here is a 247-residue protein sequence, read N- to C-terminus: Chaperone protein AfaB (247 aa).

Positions 1–29 (MKMRAVAVFTGMLTGVLSVAGLLSAGAYA) are cleaved as a signal peptide.

It belongs to the periplasmic pilus chaperone family.

Its subcellular location is the periplasm. Involved in the biogenesis of the AFA-III afimbrial adhesin. The protein is Chaperone protein AfaB (afaB) of Escherichia coli.